The chain runs to 112 residues: MTESEFLKQAEATLDQIEATLEELANTSDLDVECTRSGNVLEIEFIDNGTKIIVNSQAPMQELWVAAKSGGFHFKAQGEQWMNTRDATELFAALSQMVSQQGGVEVVLRDAG.

Belongs to the frataxin family.

Its function is as follows. Involved in iron-sulfur (Fe-S) cluster assembly. May act as a regulator of Fe-S biogenesis. The polypeptide is Iron-sulfur cluster assembly protein CyaY (Herminiimonas arsenicoxydans).